The chain runs to 81 residues: MKLTCMMIVAVLFLTAWTFVTAVPHSSNALENLYLKARHEMENPEASKLNTRDDCEPPGNFCGMIKIGPPCCSGWCFFACA.

The first 22 residues, 1-22 (MKLTCMMIVAVLFLTAWTFVTA), serve as a signal peptide directing secretion. Positions 23–52 (VPHSSNALENLYLKARHEMENPEASKLNTR) are excised as a propeptide. Disulfide bonds link Cys55–Cys72, Cys62–Cys76, and Cys71–Cys80.

Belongs to the conotoxin O1 superfamily. Expressed by the venom duct.

It is found in the secreted. Functionally, omega-conotoxins act at presynaptic membranes, they bind and block voltage-gated calcium channels (Cav). The sequence is that of Omega-conotoxin-like TxMKLT1-0223 from Conus textile (Cloth-of-gold cone).